A 239-amino-acid polypeptide reads, in one-letter code: 1-(5-phosphoribosyl)-5-[(5-phosphoribosylamino)methylideneamino] imidazole-4-carboxamide isomerase (239 aa).

Asp-8 (proton acceptor) is an active-site residue. The active-site Proton donor is Asp-129.

It belongs to the HisA/HisF family.

The protein resides in the cytoplasm. It carries out the reaction 1-(5-phospho-beta-D-ribosyl)-5-[(5-phospho-beta-D-ribosylamino)methylideneamino]imidazole-4-carboxamide = 5-[(5-phospho-1-deoxy-D-ribulos-1-ylimino)methylamino]-1-(5-phospho-beta-D-ribosyl)imidazole-4-carboxamide. The protein operates within amino-acid biosynthesis; L-histidine biosynthesis; L-histidine from 5-phospho-alpha-D-ribose 1-diphosphate: step 4/9. The chain is 1-(5-phosphoribosyl)-5-[(5-phosphoribosylamino)methylideneamino] imidazole-4-carboxamide isomerase from Cereibacter sphaeroides (strain ATCC 17029 / ATH 2.4.9) (Rhodobacter sphaeroides).